Consider the following 341-residue polypeptide: Putative ubiquitin-like-specific protease 1B (341 aa).

Residues H231, D248, and C300 contribute to the active site.

This sequence belongs to the peptidase C48 family.

Functionally, protease that catalyzes two essential functions in the SUMO pathway: processing of full-length SUMOs to their mature forms and deconjugation of SUMO from targeted proteins. The sequence is that of Putative ubiquitin-like-specific protease 1B (ULP1B) from Arabidopsis thaliana (Mouse-ear cress).